The following is a 205-amino-acid chain: Nuclear transcription factor Y subunit C-6 (205 aa).

The tract at residues 1-24 (MEPKSTTPPPPPPPPVLGAPVPYP) is disordered.

Belongs to the NFYC/HAP5 subunit family. Heterotrimeric transcription factor composed of three components, NF-YA, NF-YB and NF-YC. NF-YB and NF-YC must interact and dimerize for NF-YA association and DNA binding. Interacts with NFYB2. Interacts with NFYB8, NFYB10 and HD5/NFYB11.

It is found in the nucleus. The protein localises to the cytoplasm. Component of the NF-Y/HAP transcription factor complex. The sequence is that of Nuclear transcription factor Y subunit C-6 from Oryza sativa subsp. japonica (Rice).